A 287-amino-acid polypeptide reads, in one-letter code: tRNA pseudouridine synthase B (287 aa).

The active-site Nucleophile is aspartate 38.

This sequence belongs to the pseudouridine synthase TruB family. Type 1 subfamily.

It catalyses the reaction uridine(55) in tRNA = pseudouridine(55) in tRNA. In terms of biological role, responsible for synthesis of pseudouridine from uracil-55 in the psi GC loop of transfer RNAs. The polypeptide is tRNA pseudouridine synthase B (Mycoplasma mobile (strain ATCC 43663 / 163K / NCTC 11711) (Mesomycoplasma mobile)).